A 124-amino-acid chain; its full sequence is Iron-sulfur cluster insertion protein ErpA (124 aa).

3 residues coordinate iron-sulfur cluster: C52, C116, and C118.

The protein belongs to the HesB/IscA family. As to quaternary structure, homodimer. Iron-sulfur cluster serves as cofactor.

Its function is as follows. Required for insertion of 4Fe-4S clusters for at least IspG. The sequence is that of Iron-sulfur cluster insertion protein ErpA from Acidithiobacillus ferrooxidans (strain ATCC 23270 / DSM 14882 / CIP 104768 / NCIMB 8455) (Ferrobacillus ferrooxidans (strain ATCC 23270)).